We begin with the raw amino-acid sequence, 180 residues long: Peptidyl-tRNA hydrolase (180 aa).

Tyr-13 is a binding site for tRNA. His-18 (proton acceptor) is an active-site residue. TRNA contacts are provided by Tyr-58, Asn-60, and Asn-100.

Belongs to the PTH family. Monomer.

It is found in the cytoplasm. It catalyses the reaction an N-acyl-L-alpha-aminoacyl-tRNA + H2O = an N-acyl-L-amino acid + a tRNA + H(+). Its function is as follows. Hydrolyzes ribosome-free peptidyl-tRNAs (with 1 or more amino acids incorporated), which drop off the ribosome during protein synthesis, or as a result of ribosome stalling. Catalyzes the release of premature peptidyl moieties from peptidyl-tRNA molecules trapped in stalled 50S ribosomal subunits, and thus maintains levels of free tRNAs and 50S ribosomes. The chain is Peptidyl-tRNA hydrolase from Fervidobacterium nodosum (strain ATCC 35602 / DSM 5306 / Rt17-B1).